The primary structure comprises 29 residues: L-serine dehydratase, beta chain (29 aa).

The protein belongs to the iron-sulfur dependent L-serine dehydratase family. As to quaternary structure, heterodimer of an alpha chain and a beta chain. Requires [4Fe-4S] cluster as cofactor.

It carries out the reaction L-serine = pyruvate + NH4(+). It participates in carbohydrate biosynthesis; gluconeogenesis. This chain is L-serine dehydratase, beta chain, found in Anaerotignum propionicum (Clostridium propionicum).